A 521-amino-acid polypeptide reads, in one-letter code: MEELQLQGYLEKDGSRQQNFLYPLIFQEYIYTLAHDHGLNSSIFYEPMEIVGLGYDNKSSSVLVKRLITQMYQQNSLIYSMNDFNQNRFVGHNNSFYSNFYSQMVSEGFAVIVEIPFSLRLVPSSEEIQIPKSQNLRSIHSIFPFLEDKLSHLNYVLDILIPYPIHLEILVQILQCWIQDVPSLHFLRFFLHEFHNWNNLNLITPTKSISVFSKENKRLFWILYNSYVSEYEFLFVFLRKQSYYLRSTSSRAFLERTHFYVKIEHLIDVCHNHFQKILWFFKDSFMHYVRYKGKAILASRGTYLLIKKWKCYLVNFWQYNFHFWSKPYRIHINPFSNYSFYFLGYISSVLINPSAVKNQMLENFYLVDTLTQKFDTIVPVIPLIGSLSKAKFCTILGHPISKPIWAELSDSDIMDRFGRICRNLSHYHSGSSKKQSLYRIKYILRLSCARTLARKHKSTVRNLLQRLGSGLLEEFFTEEEQVISPIFPKTTLFPLHGSHRERIWYLDIIRINDLANYLDWS.

It belongs to the intron maturase 2 family. MatK subfamily.

Its subcellular location is the plastid. The protein resides in the chloroplast. Its function is as follows. Usually encoded in the trnK tRNA gene intron. Probably assists in splicing its own and other chloroplast group II introns. The polypeptide is Maturase K (Trillium erectum (Beth root)).